Reading from the N-terminus, the 331-residue chain is Holliday junction branch migration complex subunit RuvB (331 aa).

Residues 4 to 182 (KDILQSSECI…FGIPMHLEFY (179 aa)) are large ATPase domain (RuvB-L). ATP contacts are provided by residues R22, G63, K66, T67, T68, 129–131 (EDF), R172, Y182, and R219. T67 is a Mg(2+) binding site. The interval 183–253 (STEELTKVIK…FADQALLRLG (71 aa)) is small ATPAse domain (RuvB-S). Residues 256-331 (KLGLDRQDIK…SYLNEQTYNM (76 aa)) are head domain (RuvB-H). The DNA site is built by R309 and R314.

Belongs to the RuvB family. In terms of assembly, homohexamer. Forms an RuvA(8)-RuvB(12)-Holliday junction (HJ) complex. HJ DNA is sandwiched between 2 RuvA tetramers; dsDNA enters through RuvA and exits via RuvB. An RuvB hexamer assembles on each DNA strand where it exits the tetramer. Each RuvB hexamer is contacted by two RuvA subunits (via domain III) on 2 adjacent RuvB subunits; this complex drives branch migration. In the full resolvosome a probable DNA-RuvA(4)-RuvB(12)-RuvC(2) complex forms which resolves the HJ.

The protein localises to the cytoplasm. The catalysed reaction is ATP + H2O = ADP + phosphate + H(+). Its function is as follows. The RuvA-RuvB-RuvC complex processes Holliday junction (HJ) DNA during genetic recombination and DNA repair, while the RuvA-RuvB complex plays an important role in the rescue of blocked DNA replication forks via replication fork reversal (RFR). RuvA specifically binds to HJ cruciform DNA, conferring on it an open structure. The RuvB hexamer acts as an ATP-dependent pump, pulling dsDNA into and through the RuvAB complex. RuvB forms 2 homohexamers on either side of HJ DNA bound by 1 or 2 RuvA tetramers; 4 subunits per hexamer contact DNA at a time. Coordinated motions by a converter formed by DNA-disengaged RuvB subunits stimulates ATP hydrolysis and nucleotide exchange. Immobilization of the converter enables RuvB to convert the ATP-contained energy into a lever motion, pulling 2 nucleotides of DNA out of the RuvA tetramer per ATP hydrolyzed, thus driving DNA branch migration. The RuvB motors rotate together with the DNA substrate, which together with the progressing nucleotide cycle form the mechanistic basis for DNA recombination by continuous HJ branch migration. Branch migration allows RuvC to scan DNA until it finds its consensus sequence, where it cleaves and resolves cruciform DNA. This Ehrlichia ruminantium (strain Gardel) protein is Holliday junction branch migration complex subunit RuvB.